A 215-amino-acid polypeptide reads, in one-letter code: Pyridoxine/pyridoxamine 5'-phosphate oxidase (215 aa).

Substrate contacts are provided by residues 11 to 14 (RRDY) and lysine 69. FMN is bound by residues 64-69 (RVVLLK), 79-80 (YT), lysine 86, and glutamine 108. Tyrosine 126, arginine 130, and serine 134 together coordinate substrate. Residues 143 to 144 (QS) and tryptophan 188 each bind FMN. Position 194–196 (194–196 (RLH)) interacts with substrate. Position 198 (arginine 198) interacts with FMN.

This sequence belongs to the pyridoxamine 5'-phosphate oxidase family. As to quaternary structure, homodimer. Requires FMN as cofactor.

The catalysed reaction is pyridoxamine 5'-phosphate + O2 + H2O = pyridoxal 5'-phosphate + H2O2 + NH4(+). It carries out the reaction pyridoxine 5'-phosphate + O2 = pyridoxal 5'-phosphate + H2O2. Its pathway is cofactor metabolism; pyridoxal 5'-phosphate salvage; pyridoxal 5'-phosphate from pyridoxamine 5'-phosphate: step 1/1. It participates in cofactor metabolism; pyridoxal 5'-phosphate salvage; pyridoxal 5'-phosphate from pyridoxine 5'-phosphate: step 1/1. Catalyzes the oxidation of either pyridoxine 5'-phosphate (PNP) or pyridoxamine 5'-phosphate (PMP) into pyridoxal 5'-phosphate (PLP). This is Pyridoxine/pyridoxamine 5'-phosphate oxidase from Legionella pneumophila (strain Lens).